The chain runs to 1895 residues: Probable WRKY transcription factor 19 (1895 aa).

The segment at 1–85 is disordered; it reads MSEKEELPLT…SGSGLSQQLN (85 aa). A compositionally biased stretch (polar residues) spans 10–22; the sequence is TLTSIGAATATSD. Low complexity predominate over residues 28 to 39; sequence GSSGEGISSSSS. Over residues 46–62 the composition is skewed to polar residues; the sequence is MQNSPTGLMISQSSSMC. Residues 75–85 show a composition bias toward low complexity; it reads SSGSGLSQQLN. In terms of domain architecture, PAH spans 291–371; it reads RPLTIDGGGN…LGFNTYLSKE (81 aa). Over residues 408–417 the composition is skewed to polar residues; sequence ANMQPQTEYP. Disordered stretches follow at residues 408-442, 517-538, and 580-620; these read ANMQ…SSLL, YKDR…TYLS, and EASD…ADAS. Residues 418 to 427 show a composition bias toward low complexity; sequence SSSAVQSFSS. The segment covering 428 to 442 has biased composition (polar residues); the sequence is GQPQIPTSAPDSSLL. The WRKY 1 DNA-binding region spans 462–526; that stretch reads NVDKQVNDGY…YKDRHNHEPP (65 aa). Positions 635–700 form a DNA-binding region, WRKY 2; the sequence is SEVDNLDDGY…SLCRRGISVY (66 aa). One can recognise a TIR domain in the interval 666–808; sequence KDYDVVIRYG…EIVRDALKVL (143 aa). Residues 800-1087 enclose the NB-ARC domain; it reads IVRDALKVLC…LDGCGFSAHV (288 aa). 844–851 serves as a coordination point for ATP; it reads GTVGIGKT. LRR repeat units follow at residues 1206-1227, 1228-1249, 1259-1281, 1282-1304, 1306-1328, 1329-1351, 1352-1371, 1373-1395, 1397-1419, and 1421-1442; these read KLRL…FNPE, NLVE…KKAR, KLKK…SSAT, NLEH…ISYL, KLVF…VDLE, SLEV…SPNV, KELY…IKNL, LLEK…IYKL, HLET…SRRM, and CLRF…ISYL. The tract at residues 1562 to 1583 is disordered; sequence ETVAPPSSSSEAREEEVETEET. Residues 1626–1877 enclose the Protein kinase domain; it reads WQKGQLLGRG…AAELLNHPFV (252 aa). ATP is bound by residues 1632 to 1640 and K1654; that span reads LGRGSLGSV. Residue D1758 is part of the active site.

It belongs to the disease resistance X-TIR-NB-LRR-X family.

The protein localises to the nucleus. Its function is as follows. Transcription factor. Interacts specifically with the W box (5'-(T)TGAC[CT]-3'), a frequently occurring elicitor-responsive cis-acting element. May act also as a disease resistance protein with a serine/threonine-protein kinase activity. This is Probable WRKY transcription factor 19 (WRKY19) from Arabidopsis thaliana (Mouse-ear cress).